The following is a 356-amino-acid chain: Heat-inducible transcription repressor HrcA (356 aa).

Belongs to the HrcA family.

Functionally, negative regulator of class I heat shock genes (grpE-dnaK-dnaJ and groELS operons). Prevents heat-shock induction of these operons. This is Heat-inducible transcription repressor HrcA from Chlorobaculum tepidum (strain ATCC 49652 / DSM 12025 / NBRC 103806 / TLS) (Chlorobium tepidum).